We begin with the raw amino-acid sequence, 143 residues long: Large ribosomal subunit protein uL15 (143 aa).

The segment at 1–45 (MLLNTVQPGVGAKHAKRRVGRGIGSGLGKTCGRGHKGQKSRAGGF) is disordered. Positions 21 to 31 (RGIGSGLGKTC) are enriched in gly residues.

The protein belongs to the universal ribosomal protein uL15 family. As to quaternary structure, part of the 50S ribosomal subunit.

Binds to the 23S rRNA. The chain is Large ribosomal subunit protein uL15 from Chromobacterium violaceum (strain ATCC 12472 / DSM 30191 / JCM 1249 / CCUG 213 / NBRC 12614 / NCIMB 9131 / NCTC 9757 / MK).